The following is a 171-amino-acid chain: Transcription factor E (171 aa).

Positions 5 to 91 (DNKAVRGYIQ…LWKLDLDNSV (87 aa)) constitute an HTH TFE/IIEalpha-type domain.

The protein belongs to the TFE family. Monomer. Interaction with RNA polymerase subunits RpoF and RpoE is necessary for Tfe stimulatory transcription activity. Able to interact with Tbp and RNA polymerase in the absence of DNA promoter. Interacts both with the preinitiation and elongation complexes.

In terms of biological role, transcription factor that plays a role in the activation of archaeal genes transcribed by RNA polymerase. Facilitates transcription initiation by enhancing TATA-box recognition by TATA-box-binding protein (Tbp), and transcription factor B (Tfb) and RNA polymerase recruitment. Not absolutely required for transcription in vitro, but particularly important in cases where Tbp or Tfb function is not optimal. It dynamically alters the nucleic acid-binding properties of RNA polymerases by stabilizing the initiation complex and destabilizing elongation complexes. Seems to translocate with the RNA polymerase following initiation and acts by binding to the non template strand of the transcription bubble in elongation complexes. The protein is Transcription factor E of Methanocella arvoryzae (strain DSM 22066 / NBRC 105507 / MRE50).